The following is a 109-amino-acid chain: Ferredoxin CarAc (109 aa).

Residues 3 to 108 (AKVRVIFRAA…GLTLELPKAQ (106 aa)) form the 2Fe-2S ferredoxin-type domain. [2Fe-2S] cluster-binding residues include Cys-43, Cys-49, Cys-52, and Cys-89.

Belongs to the adrenodoxin/putidaredoxin family. Monomer. Carbazole 1,9a-dioxygenase complex consists of a terminal oxygenase component CarAa, a ferredoxin reductase component fdr and a ferredoxin component CarAc. [2Fe-2S] cluster serves as cofactor.

Part of the multicomponent carbazole 1,9a-dioxygenase (CARDO), that converts carbazole (CAR) into 2-aminobiphenyl-2,3-diol. Acts as a mediator in the electron transfer from fdr to CarAa. This Sphingomonas sp protein is Ferredoxin CarAc (carAc).